The chain runs to 699 residues: Polyribonucleotide nucleotidyltransferase (699 aa).

Mg(2+) contacts are provided by D484 and D490. The KH domain maps to P551–I610. The S1 motif domain occupies G620–K688.

The protein belongs to the polyribonucleotide nucleotidyltransferase family. Mg(2+) serves as cofactor.

It is found in the cytoplasm. It carries out the reaction RNA(n+1) + phosphate = RNA(n) + a ribonucleoside 5'-diphosphate. Functionally, involved in mRNA degradation. Catalyzes the phosphorolysis of single-stranded polyribonucleotides processively in the 3'- to 5'-direction. The polypeptide is Polyribonucleotide nucleotidyltransferase (Syntrophotalea carbinolica (strain DSM 2380 / NBRC 103641 / GraBd1) (Pelobacter carbinolicus)).